An 863-amino-acid chain; its full sequence is Bifunctional uridylyltransferase/uridylyl-removing enzyme (863 aa).

A uridylyltransferase region spans residues 1–328 (MLFSPTLSSL…SSNQDTVIDQ (328 aa)). Residues 329–687 (LDDDFQLINQ…ISNRFSLGGT (359 aa)) are uridylyl-removing. The region spanning 446–568 (VDEHTLRVML…MQNQVRLDYL (123 aa)) is the HD domain. ACT domains are found at residues 688–764 (EVFI…KLPA) and 794–863 (EMEL…QQIR).

The protein belongs to the GlnD family. It depends on Mg(2+) as a cofactor.

It catalyses the reaction [protein-PII]-L-tyrosine + UTP = [protein-PII]-uridylyl-L-tyrosine + diphosphate. The enzyme catalyses [protein-PII]-uridylyl-L-tyrosine + H2O = [protein-PII]-L-tyrosine + UMP + H(+). Its activity is regulated as follows. Uridylyltransferase (UTase) activity is inhibited by glutamine, while glutamine activates uridylyl-removing (UR) activity. Its function is as follows. Modifies, by uridylylation and deuridylylation, the PII regulatory proteins (GlnB and homologs), in response to the nitrogen status of the cell that GlnD senses through the glutamine level. Under low glutamine levels, catalyzes the conversion of the PII proteins and UTP to PII-UMP and PPi, while under higher glutamine levels, GlnD hydrolyzes PII-UMP to PII and UMP (deuridylylation). Thus, controls uridylylation state and activity of the PII proteins, and plays an important role in the regulation of nitrogen assimilation and metabolism. The polypeptide is Bifunctional uridylyltransferase/uridylyl-removing enzyme (Haemophilus influenzae (strain ATCC 51907 / DSM 11121 / KW20 / Rd)).